The sequence spans 530 residues: Negative elongation factor A (530 aa).

Residues 89 to 248 enclose the HDAg domain; that stretch reads WVLMVADILK…TPIPPSRTPL (160 aa). The NELF-C/D-binding stretch occupies residues 125–188; that stretch reads REKVSECEAS…LQKSTETAQQ (64 aa). The residue at position 157 (T157) is a Phosphothreonine. Positions 189–248 are RNAPII-binding; the sequence is LKRSAGVPFHAKGRGLLRKMDTTTPLKGIPKQAPFRSPTTPSVFSPSGNRTPIPPSRTPL. Disordered regions lie at residues 213–248, 266–296, and 312–409; these read PLKG…RTPL, GAGR…VENA, and SLNS…TAQT. 2 positions are modified to phosphoserine: S225 and S233. Residues 225–238 show a composition bias toward polar residues; that stretch reads SPTTPSVFSPSGNR. T277 carries the phosphothreonine modification. The span at 277–291 shows a compositional bias: basic and acidic residues; it reads TLDTEVVEKPTKEET. Residues 315-341 show a composition bias toward low complexity; sequence SEPTLPSTSYLPSTPSVVPASSYIPSS. Position 363 is a phosphoserine (S363).

The protein belongs to the NELF-A family. The NELF complex is composed of NELFA, NELFB, NELFCD and NELFE; NELFA and NELFCD form a stable subcomplex that binds to the N-terminus of NELFB. In vitro, the NELFA:NELFCD subcomplex binds to ssDNA and ssRNA in a sequence- and structure-dependent manner. Interacts with the RNA polymerase II complex when it is not phosphorylated by P-TEFb. Interacts with NELFB. Ubiquitous. Expressed in brain, heart, spleen, lung, liver, muscle, kidney and testis. Already expressed in 7 dpc embryos.

It is found in the nucleus. In terms of biological role, essential component of the NELF complex, a complex that negatively regulates the elongation of transcription by RNA polymerase II. The NELF complex, which acts via an association with the DSIF complex and causes transcriptional pausing, is counteracted by the P-TEFb kinase complex. This chain is Negative elongation factor A (Nelfa), found in Mus musculus (Mouse).